Reading from the N-terminus, the 529-residue chain is CRISPR-associated endodeoxyribonuclease Cas12f1 (529 aa).

The interval 1–95 (MAKNTITKTL…RGQFPDAVFW (95 aa)) is zinc finger domain (ZF). Residues Cys-50, His-53, Cys-69, and Cys-72 each contribute to the Zn(2+) site. Residues 96-192 (QEISEIFRQL…PTTKSDNFPI (97 aa)) form a recognition domain (REC) region. Residues 193 to 312 (PLVKQKGGQY…MLNLSIDVPK (120 aa)) form a wedge domain (WED) region. The interval 313–321 (IDKGVDPSI) is linker. Residues 322 to 473 (IGGIDVGVKS…RKVAPNNTSK (152 aa)) form a ruvC-I region. Active-site residues include Asp-326 and Glu-422. The tract at residues 474 to 508 (TCSKCGHLNNYFNFEYRKKNKFPHFKCEKCNFKEN) is target nucleic acid-binding (TNB). Positions 475 and 478 each coordinate Zn(2+). Residue Arg-490 is part of the active site. 2 residues coordinate Zn(2+): Cys-500 and Cys-503. Residues 509-529 (ADYNAALNISNPKLKSTKEEP) are ruvC-II. Asp-510 is an active-site residue.

This sequence belongs to the CRISPR-associated endonuclease Cas12f family. As to quaternary structure, an asymmetric homodimer. Guide RNA is probably required for dimerization. Requires Mg(2+) as cofactor. Zn(2+) is required as a cofactor.

Its activity is regulated as follows. Target ssDNA cleavage is inhibited by EDTA. Activity is maximal with 5-50 mM NaCl, is less efficient at higher NaCl concentrations. Its function is as follows. CRISPR (clustered regularly interspaced short palindromic repeat), is an adaptive immune system that provides protection against mobile genetic elements (viruses, transposable elements and conjugative plasmids). CRISPR clusters contain sequences complementary to antecedent mobile elements and target invading nucleic acids. CRISPR clusters are transcribed and processed into CRISPR RNA (crRNA), which requires a trans-encoded small RNA (tracrRNA), but not this protein (in vitro). Upon expression in E.coli of this protein, a mini CRISPR array and the probable tracrRNA, the protein associates with both RNAs. The mini system is not active in E.coli against phiX174 phage, nor is it active in protection against transformation by foreign plasmids. In vitro the purified protein-tracrRNA-crRNA complex cleaves ssDNA complementary to the crRNA; target cleavage requires both tracrRNA and crRNA, but not a protospacer adjacent motif (PAM). The tracrRNA-crRNA can be replaced by a single guide RNA (sgRNA). 2-nucleotide mismatches in the middle of the crRNA:DNA heteroduplex decrease cleavage. Cleavage occurs just downstream of the heteroduplex. Activation of this protein results in non-specific ssDNA degradation in vitro. In vitro and in E.coli (coexpressed with sgRNA) has dsDNA endonuclease activity, recognizing the 5' PAM sequence TTTR; both sgRNA and a PAM are required for activity. Cleaves the target strand 24 and the nontarget strand 22 bases upstream of the PAM (respectively), resulting in 5' overhangs. The 2 monomers interact differently with the sgRNA and target DNA. Mutagenesis of a dimeric construct shows that one of the RuvC monomers probably cleaves both DNA strands. The protein is CRISPR-associated endodeoxyribonuclease Cas12f1 of Uncultured archaeon.